A 33-amino-acid polypeptide reads, in one-letter code: Photosystem II reaction center protein T (33 aa).

A helical transmembrane segment spans residues 3–23; sequence ALVYTFLLVSTLGILFFSIFF.

Belongs to the PsbT family. In terms of assembly, PSII is composed of 1 copy each of membrane proteins PsbA, PsbB, PsbC, PsbD, PsbE, PsbF, PsbH, PsbI, PsbJ, PsbK, PsbL, PsbM, PsbT, PsbY, PsbZ, Psb30/Ycf12, at least 3 peripheral proteins of the oxygen-evolving complex and a large number of cofactors. It forms dimeric complexes.

The protein resides in the plastid. It localises to the chloroplast thylakoid membrane. Its function is as follows. Found at the monomer-monomer interface of the photosystem II (PS II) dimer, plays a role in assembly and dimerization of PSII. PSII is a light-driven water plastoquinone oxidoreductase, using light energy to abstract electrons from H(2)O, generating a proton gradient subsequently used for ATP formation. This chain is Photosystem II reaction center protein T, found in Pelargonium hortorum (Common geranium).